Reading from the N-terminus, the 332-residue chain is Acetyl-coenzyme A carboxylase carboxyl transferase subunit alpha (332 aa).

One can recognise a CoA carboxyltransferase C-terminal domain in the interval 44 to 298 (QLESRAQNLR…KETLVNNLEE (255 aa)).

The protein belongs to the AccA family. As to quaternary structure, acetyl-CoA carboxylase is a heterohexamer composed of biotin carboxyl carrier protein (AccB), biotin carboxylase (AccC) and two subunits each of ACCase subunit alpha (AccA) and ACCase subunit beta (AccD).

It localises to the cytoplasm. It carries out the reaction N(6)-carboxybiotinyl-L-lysyl-[protein] + acetyl-CoA = N(6)-biotinyl-L-lysyl-[protein] + malonyl-CoA. The protein operates within lipid metabolism; malonyl-CoA biosynthesis; malonyl-CoA from acetyl-CoA: step 1/1. Functionally, component of the acetyl coenzyme A carboxylase (ACC) complex. First, biotin carboxylase catalyzes the carboxylation of biotin on its carrier protein (BCCP) and then the CO(2) group is transferred by the carboxyltransferase to acetyl-CoA to form malonyl-CoA. The sequence is that of Acetyl-coenzyme A carboxylase carboxyl transferase subunit alpha from Crocosphaera subtropica (strain ATCC 51142 / BH68) (Cyanothece sp. (strain ATCC 51142)).